The following is a 179-amino-acid chain: MYEYLDRRYALALYEVAEENNKVDEYLKDLKEVVNIIKNSEDICKILKHPEINTSRKKEIFTELFKDKVDDKILSFLLVLIEKDRILYLEEKLKEMEKIYLEKNNMILANVKTVIPLLKEEREELIEKLGNKYNKKIILEEEIDKSIIGGVYVRVGDDVLDGTLSTRLKDIKKMMLKRE.

It belongs to the ATPase delta chain family. F-type ATPases have 2 components, F(1) - the catalytic core - and F(0) - the membrane proton channel. F(1) has five subunits: alpha(3), beta(3), gamma(1), delta(1), epsilon(1). F(0) has three main subunits: a(1), b(2) and c(10-14). The alpha and beta chains form an alternating ring which encloses part of the gamma chain. F(1) is attached to F(0) by a central stalk formed by the gamma and epsilon chains, while a peripheral stalk is formed by the delta and b chains.

The protein resides in the cell membrane. F(1)F(0) ATP synthase produces ATP from ADP in the presence of a proton or sodium gradient. F-type ATPases consist of two structural domains, F(1) containing the extramembraneous catalytic core and F(0) containing the membrane proton channel, linked together by a central stalk and a peripheral stalk. During catalysis, ATP synthesis in the catalytic domain of F(1) is coupled via a rotary mechanism of the central stalk subunits to proton translocation. In terms of biological role, this protein is part of the stalk that links CF(0) to CF(1). It either transmits conformational changes from CF(0) to CF(1) or is implicated in proton conduction. This is ATP synthase subunit delta from Clostridium botulinum (strain 657 / Type Ba4).